A 296-amino-acid polypeptide reads, in one-letter code: HTH-type transcriptional regulator GltR (296 aa).

The 58-residue stretch at 1–58 (MNIQLLQVFLTTAREGSISKAALTLNYAQSNVTNKIQQLENDLQTKLFYRHSRGITLT) folds into the HTH lysR-type domain. The segment at residues 18–37 (ISKAALTLNYAQSNVTNKIQ) is a DNA-binding region (H-T-H motif).

Belongs to the LysR transcriptional regulatory family.

Functionally, positive regulator of glutamate biosynthesis (gltAB genes). Negatively regulates its own expression. This chain is HTH-type transcriptional regulator GltR (gltR), found in Bacillus subtilis (strain 168).